We begin with the raw amino-acid sequence, 599 residues long: Elongation factor 4 (599 aa).

Residues 2–184 enclose the tr-type G domain; that stretch reads KNIRNFSIIA…RLVRDIPPPE (183 aa). GTP is bound by residues 14–19 and 131–134; these read DHGKST and NKID.

Belongs to the TRAFAC class translation factor GTPase superfamily. Classic translation factor GTPase family. LepA subfamily.

Its subcellular location is the cell inner membrane. It catalyses the reaction GTP + H2O = GDP + phosphate + H(+). In terms of biological role, required for accurate and efficient protein synthesis under certain stress conditions. May act as a fidelity factor of the translation reaction, by catalyzing a one-codon backward translocation of tRNAs on improperly translocated ribosomes. Back-translocation proceeds from a post-translocation (POST) complex to a pre-translocation (PRE) complex, thus giving elongation factor G a second chance to translocate the tRNAs correctly. Binds to ribosomes in a GTP-dependent manner. The chain is Elongation factor 4 from Sodalis glossinidius (strain morsitans).